Here is a 137-residue protein sequence, read N- to C-terminus: MRTLWIVTVLLVGVEGSLVELGKMILQETGKNPLTSYGVYGCNCGVGGRHKPKDGTDRCCYVHKCCYKKMTDCDPKKDRYSYSWKDKTIVCDENNPCLKELCECDKAVAICLRENLDTYNKKYKIYPKFFCKKAEPC.

The first 16 residues, 1–16 (MRTLWIVTVLLVGVEG), serve as a signal peptide directing secretion. Intrachain disulfides connect Cys-42–Cys-131, Cys-44–Cys-60, Cys-59–Cys-111, Cys-65–Cys-137, Cys-66–Cys-104, Cys-73–Cys-97, and Cys-91–Cys-102. The important for membrane-damaging activities in eukaryotes and bacteria; heparin-binding stretch occupies residues 121 to 133 (KKYKIYPKFFCKK).

Belongs to the phospholipase A2 family. Group II subfamily. K49 sub-subfamily. As to quaternary structure, homodimer; non-covalently linked. As to expression, expressed by the venom gland.

The protein resides in the secreted. Functionally, snake venom phospholipase A2 homolog that lacks enzymatic activity. Is myotoxic and displays edema-inducing activities. A model of myotoxic mechanism has been proposed: an apo Lys49-PLA2 is activated by the entrance of a hydrophobic molecule (e.g. fatty acid) at the hydrophobic channel of the protein leading to a reorientation of a monomer. This reorientation causes a transition between 'inactive' to 'active' states, causing alignment of C-terminal and membrane-docking sites (MDoS) side-by-side and putting the membrane-disruption sites (MDiS) in the same plane, exposed to solvent and in a symmetric position for both monomers. The MDoS region stabilizes the toxin on membrane by the interaction of charged residues with phospholipid head groups. Subsequently, the MDiS region destabilizes the membrane with penetration of hydrophobic residues. This insertion causes a disorganization of the membrane, allowing an uncontrolled influx of ions (i.e. calcium and sodium), and eventually triggering irreversible intracellular alterations and cell death. The protein is Basic phospholipase A2 homolog 4a of Bothrops asper (Terciopelo).